Consider the following 93-residue polypeptide: DNA/RNA-binding protein Alba (93 aa).

Residue lysine 11 is modified to N6-acetyllysine.

The protein belongs to the histone-like Alba family. In terms of processing, acetylated. Acetylation at Lys-11 decreases DNA-binding affinity.

The protein localises to the cytoplasm. Its subcellular location is the chromosome. Its function is as follows. Binds double-stranded DNA tightly but without sequence specificity. Involved in DNA compaction. This chain is DNA/RNA-binding protein Alba, found in Pyrococcus furiosus (strain ATCC 43587 / DSM 3638 / JCM 8422 / Vc1).